The primary structure comprises 125 residues: Large ribosomal subunit protein bL19 (125 aa).

Belongs to the bacterial ribosomal protein bL19 family.

This protein is located at the 30S-50S ribosomal subunit interface and may play a role in the structure and function of the aminoacyl-tRNA binding site. This Wolbachia sp. subsp. Brugia malayi (strain TRS) protein is Large ribosomal subunit protein bL19.